A 277-amino-acid chain; its full sequence is 2-dehydro-3-deoxyphosphooctonate aldolase (277 aa).

The protein belongs to the KdsA family.

The protein localises to the cytoplasm. The catalysed reaction is D-arabinose 5-phosphate + phosphoenolpyruvate + H2O = 3-deoxy-alpha-D-manno-2-octulosonate-8-phosphate + phosphate. Its pathway is carbohydrate biosynthesis; 3-deoxy-D-manno-octulosonate biosynthesis; 3-deoxy-D-manno-octulosonate from D-ribulose 5-phosphate: step 2/3. It participates in bacterial outer membrane biogenesis; lipopolysaccharide biosynthesis. The protein is 2-dehydro-3-deoxyphosphooctonate aldolase of Vesicomyosocius okutanii subsp. Calyptogena okutanii (strain HA).